Here is a 536-residue protein sequence, read N- to C-terminus: Hydroxylamine oxidoreductase (536 aa).

The signal sequence occupies residues 1–26; sequence MFEIFKKPLSRIVGATFAFAGVTLLA. 22 residues coordinate heme c: C116, C119, H120, H136, C160, C163, H164, H168, C179, C182, H183, H198, C223, C226, H227, C234, C237, H238, H241, C254, C257, and H258. H263 lines the hydroxylamine pocket. 10 residues coordinate heme c: H274, C301, C304, H305, H311, C346, C349, H350, H443, and Y451.

As to quaternary structure, homotrimer; subunits are linked by two covalent bonds between Tyr-451 of one subunit and heme P460 of an adjacent subunit. Heme c serves as cofactor.

The protein resides in the anammoxosome. It carries out the reaction hydroxylamine + 3 Fe(III)-[cytochrome c] = nitric oxide + 3 Fe(II)-[cytochrome c] + 3 H(+). Catalyzes the oxidation of hydroxylamine to nitric oxide with cytochrome c acting as an electron acceptor. Does not oxidize hydroxylamine to nitrite. Also able to catalyze the four-electron oxidation of hydrazine to N(2) in vitro with reduced efficiency; however, this reaction is probably not physiological. This Kuenenia stuttgartiensis protein is Hydroxylamine oxidoreductase.